Consider the following 446-residue polypeptide: MITIKKGLDLPIAGVPTQVINDGNSITKVALLGEEYVGMRPTMHARVEDVVKKGQILFADKKNPGVIFTSPVSGKVVEINRGAKRVLQSVVIAVEGEEQVTFNSYAANQLASLDRDAIKQQLIDSGAWTALRTRPFSKVPAIDSETKAIFVTAMDTNPLAADAEVIINQQEDAFVAGLDLLSVLTGEKVYVCKKGGSLPRSSQGNVEEHVFDGPHPAGLAGTHMHYLYPVDLNNVAWSIGYQDVIAFGQLFLTGEIYSDRIVSLAGPAVNNPRLVRTITGASLLELTDSEVMPGEVRIISGSVLNGTQASGPHAYLGPYHQQVCVLREGREKEFLGWAVPGKNKFSVTRSFLSHVFSGQLFNMTTTTNGSDRAMVPIGSYERVMPLDMEPTMLLRDLCAGDVDSAARLGALELDEDDLGLCTYVCPGKYEYGPMLREILDTIEKEG.

The protein belongs to the NqrA family. As to quaternary structure, composed of six subunits; NqrA, NqrB, NqrC, NqrD, NqrE and NqrF.

The enzyme catalyses a ubiquinone + n Na(+)(in) + NADH + H(+) = a ubiquinol + n Na(+)(out) + NAD(+). NQR complex catalyzes the reduction of ubiquinone-1 to ubiquinol by two successive reactions, coupled with the transport of Na(+) ions from the cytoplasm to the periplasm. NqrA to NqrE are probably involved in the second step, the conversion of ubisemiquinone to ubiquinol. The polypeptide is Na(+)-translocating NADH-quinone reductase subunit A (Aliivibrio salmonicida (strain LFI1238) (Vibrio salmonicida (strain LFI1238))).